The following is a 218-amino-acid chain: uncharacterized protein (218 aa).

The ACT domain occupies 4–83 (GISIEAENKV…IHSSLKKIYG (80 aa)).

This is an uncharacterized protein from Methanocaldococcus jannaschii (strain ATCC 43067 / DSM 2661 / JAL-1 / JCM 10045 / NBRC 100440) (Methanococcus jannaschii).